A 121-amino-acid chain; its full sequence is Pro-glucagon (121 aa).

Positions 1 to 21 are cleaved as a signal peptide; the sequence is MKGAQYLAGLLLLLFVQNSIC. Residues 80-85 constitute a propeptide that is removed on maturation; it reads SNGGSA.

Belongs to the glucagon family.

It localises to the secreted. Its function is as follows. Plays a key role in glucose metabolism and homeostasis. Regulates blood glucose by increasing gluconeogenesis and decreasing glycolysis. In Carassius auratus (Goldfish), this protein is Pro-glucagon (gcg).